A 636-amino-acid polypeptide reads, in one-letter code: Phosphomethylpyrimidine synthase (636 aa).

Residues 48–70 form a disordered region; the sequence is DDTPTDFGGEKNPPVRVYDTSGP. Substrate is bound by residues asparagine 231, methionine 260, tyrosine 289, histidine 325, 345–347, 386–389, and glutamate 425; these read SRG and DGLR. Residue histidine 429 coordinates Zn(2+). A substrate-binding site is contributed by tyrosine 452. Position 493 (histidine 493) interacts with Zn(2+). 3 residues coordinate [4Fe-4S] cluster: cysteine 573, cysteine 576, and cysteine 581.

It belongs to the ThiC family. In terms of assembly, homodimer. The cofactor is [4Fe-4S] cluster.

It carries out the reaction 5-amino-1-(5-phospho-beta-D-ribosyl)imidazole + S-adenosyl-L-methionine = 4-amino-2-methyl-5-(phosphooxymethyl)pyrimidine + CO + 5'-deoxyadenosine + formate + L-methionine + 3 H(+). It participates in cofactor biosynthesis; thiamine diphosphate biosynthesis. Functionally, catalyzes the synthesis of the hydroxymethylpyrimidine phosphate (HMP-P) moiety of thiamine from aminoimidazole ribotide (AIR) in a radical S-adenosyl-L-methionine (SAM)-dependent reaction. The polypeptide is Phosphomethylpyrimidine synthase (Cellvibrio japonicus (strain Ueda107) (Pseudomonas fluorescens subsp. cellulosa)).